The chain runs to 228 residues: Urease accessory protein UreF (228 aa).

It belongs to the UreF family. UreD, UreF and UreG form a complex that acts as a GTP-hydrolysis-dependent molecular chaperone, activating the urease apoprotein by helping to assemble the nickel containing metallocenter of UreC. The UreE protein probably delivers the nickel.

Its subcellular location is the cytoplasm. In terms of biological role, required for maturation of urease via the functional incorporation of the urease nickel metallocenter. The chain is Urease accessory protein UreF from Blochmanniella pennsylvanica (strain BPEN).